We begin with the raw amino-acid sequence, 265 residues long: Hydroxyethylthiazole kinase (265 aa).

Met-43 is a substrate binding site. Positions 118 and 165 each coordinate ATP. Gly-192 serves as a coordination point for substrate.

This sequence belongs to the Thz kinase family. Requires Mg(2+) as cofactor.

It carries out the reaction 5-(2-hydroxyethyl)-4-methylthiazole + ATP = 4-methyl-5-(2-phosphooxyethyl)-thiazole + ADP + H(+). Its pathway is cofactor biosynthesis; thiamine diphosphate biosynthesis; 4-methyl-5-(2-phosphoethyl)-thiazole from 5-(2-hydroxyethyl)-4-methylthiazole: step 1/1. In terms of biological role, catalyzes the phosphorylation of the hydroxyl group of 4-methyl-5-beta-hydroxyethylthiazole (THZ). This is Hydroxyethylthiazole kinase from Pyrococcus horikoshii (strain ATCC 700860 / DSM 12428 / JCM 9974 / NBRC 100139 / OT-3).